We begin with the raw amino-acid sequence, 1081 residues long: Mediator of RNA polymerase II transcription subunit 15 (1081 aa).

S2 is modified (N-acetylserine). Residues 25-49 form an interaction with GCN4 region; sequence LQVLMDINTLNGGSSDTADKIRIHA. A disordered region spans residues 238–286; the sequence is QAQAQANNNNNGLPQNGNINNNINIPQQQQMQPPNSSANNNPLQQQSSQ. S335 carries the post-translational modification Phosphoserine. A run of 11 repeats spans residues 422–423, 424–425, 426–427, 428–429, 430–431, 432–433, 434–435, 436–437, 438–439, 440–441, and 442–443. Residues 422 to 481 form a 30 X 2 AA approximate tandem repeats of Q-A region; the sequence is QAQAQAQAQAQAQAQAQAQAQAAQAAQAQAQAQAQAQAQAQAQAQAQAQAQAQAQAQAQA. The stretch at 444 to 445 is one 12; approximate repeat; that stretch reads AQ. One copy of the 13; approximate repeat lies at 446 to 447; sequence AA. Tandem repeats lie at residues 448–449, 450–451, 452–453, 454–455, 456–457, 458–459, 460–461, 462–463, 464–465, 466–467, 468–469, 470–471, 472–473, 474–475, 476–477, 478–479, and 480–481. Residues 476 to 497 show a composition bias toward low complexity; it reads QAQAQAHAQHQPSQQPQQAQQQ. Disordered regions lie at residues 476 to 505 and 692 to 712; these read QAQA…HGLT and QQQQ…YSAM. S736, S752, S783, S785, and S789 each carry phosphoserine. The interval 744 to 836 is disordered; sequence PVSAAATPSL…KTVQSPMGAQ (93 aa). Positions 749–836 are enriched in polar residues; that stretch reads ATPSLNKTIN…KTVQSPMGAQ (88 aa). Phosphothreonine is present on T793. S831, S1003, S1008, S1018, and S1034 each carry phosphoserine. The interval 1026–1055 is disordered; that stretch reads DSKKIKVDSPDDPFMTKSGATTSEKQEVTN.

The protein belongs to the Mediator complex subunit 15 family. Component of the Mediator complex, which is composed of at least 21 subunits that form three structurally distinct submodules. The Mediator head module contains MED6, MED8, MED11, SRB4/MED17, SRB5/MED18, ROX3/MED19, SRB2/MED20 and SRB6/MED22, the middle module contains MED1, MED4, NUT1/MED5, MED7, CSE2/MED9, NUT2/MED10, SRB7/MED21 and SOH1/MED31, and the tail module contains MED2, PGD1/MED3, RGR1/MED14, GAL11/MED15 and SIN4/MED16. The head and the middle modules interact directly with RNA polymerase II, whereas the elongated tail module interacts with gene-specific regulatory proteins. GAL11/MED15 interacts with the activator GAL4; the interaction is direct. GAL11/MED15 interacts (via multiple regions) with the activator GCN4; the interaction is direct.

It is found in the nucleus. Functionally, component of the Mediator complex, a coactivator involved in the regulated transcription of nearly all RNA polymerase II-dependent genes. Mediator functions as a bridge to convey information from gene-specific regulatory proteins to the basal RNA polymerase II transcription machinery. The Mediator complex, having a compact conformation in its free form, is recruited to promoters by direct interactions with regulatory proteins and serves for the assembly of a functional pre-initiation complex with RNA polymerase II and the general transcription factors. The Mediator complex unfolds to an extended conformation and partially surrounds RNA polymerase II, specifically interacting with the unphosphorylated form of the C-terminal domain (CTD) of RNA polymerase II. The Mediator complex dissociates from the RNA polymerase II holoenzyme and stays at the promoter when transcriptional elongation begins. It has an important role in the negative regulation of Ty transcription. This Saccharomyces cerevisiae (strain ATCC 204508 / S288c) (Baker's yeast) protein is Mediator of RNA polymerase II transcription subunit 15.